A 158-amino-acid chain; its full sequence is C-type lectin lectoxin-Enh7 (158 aa).

Residues 1 to 23 (MGQFTVVSLGLLAVFLSLSGAKG) form the signal peptide. Disulfide bonds link cysteine 26-cysteine 37, cysteine 54-cysteine 154, and cysteine 129-cysteine 146. A C-type lectin domain is found at 33 to 155 (RNGVCNKLFP…CASLHPFICQ (123 aa)). Positions 119 to 121 (EPN) match the Mannose-binding motif. Ca(2+) is bound by residues glutamate 127, asparagine 142, and aspartate 143.

This sequence belongs to the true venom lectin family. As to expression, expressed by the venom gland.

It localises to the secreted. Mannose-binding lectin which recognizes specific carbohydrate structures and agglutinates a variety of animal cells by binding to cell-surface glycoproteins and glycolipids. May be a calcium-dependent lectin. The chain is C-type lectin lectoxin-Enh7 from Pseudoferania polylepis (Macleay's water snake).